Here is a 97-residue protein sequence, read N- to C-terminus: MSKIIATLYAVMDKRPLRALSFVMALLLAGCMFWDPSRFAAKTSELEIWHGLLLMWAVCAGVIHGVGFRPQKVLWQGIFCPLLADIVLIVGLIFFFF.

This is an uncharacterized protein from Escherichia coli O157:H7.